The primary structure comprises 124 residues: Small ribosomal subunit protein uS12 (124 aa).

Residues 1-32 (MPTIQQLVRKGRQDKVSKNKTPALKGSPQRRG) are disordered. The residue at position 89 (Asp89) is a 3-methylthioaspartic acid.

This sequence belongs to the universal ribosomal protein uS12 family. As to quaternary structure, part of the 30S ribosomal subunit. Contacts proteins S8 and S17. May interact with IF1 in the 30S initiation complex.

Its function is as follows. With S4 and S5 plays an important role in translational accuracy. Functionally, interacts with and stabilizes bases of the 16S rRNA that are involved in tRNA selection in the A site and with the mRNA backbone. Located at the interface of the 30S and 50S subunits, it traverses the body of the 30S subunit contacting proteins on the other side and probably holding the rRNA structure together. The combined cluster of proteins S8, S12 and S17 appears to hold together the shoulder and platform of the 30S subunit. In Nocardioides sp. (strain ATCC BAA-499 / JS614), this protein is Small ribosomal subunit protein uS12.